The primary structure comprises 666 residues: DNA mismatch repair protein MutL (666 aa).

The protein belongs to the DNA mismatch repair MutL/HexB family.

In terms of biological role, this protein is involved in the repair of mismatches in DNA. It is required for dam-dependent methyl-directed DNA mismatch repair. May act as a 'molecular matchmaker', a protein that promotes the formation of a stable complex between two or more DNA-binding proteins in an ATP-dependent manner without itself being part of a final effector complex. The protein is DNA mismatch repair protein MutL of Clostridium botulinum (strain Loch Maree / Type A3).